We begin with the raw amino-acid sequence, 31 residues long: Sarcolipin (31 aa).

Topologically, residues 1–7 (MERSTRE) are cytoplasmic. The chain crosses the membrane as a helical span at residues 8-26 (LCLNFTVVLITVILIWLLV). Residues 27–31 (RSYQY) are Lumenal-facing.

The protein belongs to the sarcolipin family. In terms of assembly, homooligomer. Can also form heterooligomers with other sarcoplasmic/endoplasmic reticulum calcium ATPase (SERCA) regulators ARLN, ERLN, PLN and STRIT1/DWORF. Monomer. Interacts with calcium ATPase ATP2A1/SERCA1. Interacts as a monomer with ATP2A2/SERCA2; the interaction decreases ATP2A2 Ca(2+) affinity. Interacts with VMP1; VMP1 competes with PLN and SLN to prevent them from forming an inhibitory complex with ATP2A2. In terms of tissue distribution, skeletal muscle (at protein level).

It localises to the sarcoplasmic reticulum membrane. The protein resides in the endoplasmic reticulum membrane. Its function is as follows. Reversibly inhibits the activity of ATP2A1/SERCA1 and ATP2A2/SERCA2 in sarcoplasmic reticulum by decreasing the apparent affinity of the ATPase for Ca(2+). Also inhibits the activity of ATP2A3/SERCA3. Modulates calcium re-uptake during muscle relaxation and plays an important role in calcium homeostasis in muscle. Required for muscle-based, non-shivering thermogenesis. This chain is Sarcolipin (SLN), found in Oryctolagus cuniculus (Rabbit).